Here is a 139-residue protein sequence, read N- to C-terminus: Nucleoside diphosphate kinase (139 aa).

K11, F59, R87, T93, R104, and N114 together coordinate ATP. Catalysis depends on H117, which acts as the Pros-phosphohistidine intermediate.

Belongs to the NDK family. In terms of assembly, homotetramer. Mg(2+) is required as a cofactor.

The protein resides in the cytoplasm. It catalyses the reaction a 2'-deoxyribonucleoside 5'-diphosphate + ATP = a 2'-deoxyribonucleoside 5'-triphosphate + ADP. The enzyme catalyses a ribonucleoside 5'-diphosphate + ATP = a ribonucleoside 5'-triphosphate + ADP. Major role in the synthesis of nucleoside triphosphates other than ATP. The ATP gamma phosphate is transferred to the NDP beta phosphate via a ping-pong mechanism, using a phosphorylated active-site intermediate. The protein is Nucleoside diphosphate kinase of Wolbachia sp. subsp. Brugia malayi (strain TRS).